Consider the following 389-residue polypeptide: MGAPTQIPIETSPLAWLDAVERQRRDAGLRRSLRPRPPVGTELDLASNDYLGLSQHPDVIEGGVQALRIWGAGATGSRLVTGDTELHQQLEAELAEYVGAAAGLLFSSGYTANLGAVVGLSGPGSLLVSDAYSHASLVDACRLSRARVVVTPHRDVAAVDAALASRDEQRAMVITDSVFSADGTLAPLRELLAACRRHRALLVIDEAHGLGVRGGGRGLLHELGLAGAPDVVLTTTLSKALGSQGGAVLGPAAVRAHLIDAARPFIFDTGLAPGAVGAARAALGVLKAEQWRPGAVLQNARELADICDVPETPQSAVVSVLLGDPEVALAAAAACLDAGVKVGCFRPPTVPAGTSRLRLTARASLSPDEMELARRVLTDVLLGPAAARR.

Substrate is bound at residue Arg31. Residue 109-110 (GY) participates in pyridoxal 5'-phosphate binding. A substrate-binding site is contributed by His134. Pyridoxal 5'-phosphate-binding positions include Ser180, 205-208 (DEAH), and 236-239 (TLSK). Lys239 carries the N6-(pyridoxal phosphate)lysine modification. Thr349 contacts substrate.

This sequence belongs to the class-II pyridoxal-phosphate-dependent aminotransferase family. BioF subfamily. Homodimer. It depends on pyridoxal 5'-phosphate as a cofactor.

It catalyses the reaction 6-carboxyhexanoyl-[ACP] + L-alanine + H(+) = (8S)-8-amino-7-oxononanoate + holo-[ACP] + CO2. Its pathway is cofactor biosynthesis; biotin biosynthesis. Its function is as follows. Catalyzes the decarboxylative condensation of pimeloyl-[acyl-carrier protein] and L-alanine to produce 8-amino-7-oxononanoate (AON), [acyl-carrier protein], and carbon dioxide. This Mycobacterium ulcerans (strain Agy99) protein is 8-amino-7-oxononanoate synthase.